Here is a 424-residue protein sequence, read N- to C-terminus: Glutamate-1-semialdehyde 2,1-aminomutase (424 aa).

Position 258 is an N6-(pyridoxal phosphate)lysine (K258).

This sequence belongs to the class-III pyridoxal-phosphate-dependent aminotransferase family. HemL subfamily. Pyridoxal 5'-phosphate is required as a cofactor.

It is found in the cytoplasm. The catalysed reaction is (S)-4-amino-5-oxopentanoate = 5-aminolevulinate. It functions in the pathway porphyrin-containing compound metabolism; protoporphyrin-IX biosynthesis; 5-aminolevulinate from L-glutamyl-tRNA(Glu): step 2/2. The sequence is that of Glutamate-1-semialdehyde 2,1-aminomutase from Pyrobaculum islandicum (strain DSM 4184 / JCM 9189 / GEO3).